Consider the following 150-residue polypeptide: Bcl-2-interacting killer (150 aa).

The short motif at 51–65 is the BH3 element; it reads VALRLACIGDEMDLC. The helical transmembrane segment at 127-147 threads the bilayer; sequence PGQLFPMVLLVFLLLGGAWYL. The interval 127–148 is leucine-zipper; the sequence is PGQLFPMVLLVFLLLGGAWYLQ.

Interacts with RHBDL4/RHBDD1. Interacts with BCL2L10/BCL-B. Proteolytically cleaved by RHBDL4/RHBDD1. RHBDL4/RHBDD1-induced cleavage is a necessary step prior its degradation by the proteosome-dependent mechanism. Post-translationally, ubiquitinated by the ECS(ASB11) complex in response to endoplasmic reticulum stress, leading to substrate recognition by the segregase p97/VCP and degradation by the proteasome. Expressed in testis, kidney, liver, lung and heart.

The protein resides in the endomembrane system. The protein localises to the mitochondrion membrane. Accelerates programmed cell death. Binding to the apoptosis repressors Bcl-X(L), BHRF1 or Bcl-2 suppresses this death-promoting activity. The sequence is that of Bcl-2-interacting killer (Bik) from Mus musculus (Mouse).